The chain runs to 309 residues: Probable inactive poly [ADP-ribose] polymerase SRO5 (309 aa).

In terms of domain architecture, PARP catalytic spans 28–255; that stretch reads CDSSSDRSFA…AFPVLIKALS (228 aa). The RST domain maps to 238–309; the sequence is KRLRSPWMAF…IKACGHKVQH (72 aa).

In terms of assembly, interacts with dehydration-responsive DREB2 proteins and a number of transcription factors belonging to several protein families.

Its subcellular location is the nucleus matrix. Probable inactive ADP-ribosyltransferase that may be involved in stress and developmental responses. The sequence is that of Probable inactive poly [ADP-ribose] polymerase SRO5 (SRO5) from Arabidopsis thaliana (Mouse-ear cress).